A 3005-amino-acid chain; its full sequence is Highly reducing polyketide synthase AFT9-1 (3005 aa).

In terms of domain architecture, Ketosynthase family 3 (KS3) spans 1 to 337 (MDPQQRLLLE…GTNAHAILER (337 aa)). Residues Cys-87, His-222, and His-260 each act as for beta-ketoacyl synthase activity in the active site. Residues 437–751 (VFTGQGAQWP…SYMSALVRGS (315 aa)) are malonyl-CoA:ACP transacylase (MAT) domain. Residues 821–936 (HDLLGLKMTD…GSVEVKYAAA (116 aa)) form an N-terminal hotdog fold region. The dehydratase (DH) domain stretch occupies residues 821–1114 (HDLLGLKMTD…SGLELRRLAP (294 aa)). Positions 821–1118 (HDLLGLKMTD…LRRLAPTGQP (298 aa)) constitute a PKS/mFAS DH domain. His-853 acts as the Proton acceptor; for dehydratase activity in catalysis. The interval 963–1118 (IEKISSQELY…LRRLAPTGQP (156 aa)) is C-terminal hotdog fold. The Proton donor; for dehydratase activity role is filled by Asp-1028. Residues 1259–1445 (ADDSSKRCYD…MRKASLNMQL (187 aa)) are methyltransferase (CMet) domain. The tract at residues 1683–1985 (EFMKMPVFTE…QHHRNESTVL (303 aa)) is enoyl reductase (ER) (ER) domain. The tract at residues 2008–2191 (ATYVVSGGRG…YMSLNVGTIE (184 aa)) is ketoreductase (KR) domain. The Carrier domain maps to 2293-2375 (TRDFEKISQL…SLGAKVASRS (83 aa)). An O-(pantetheine 4'-phosphoryl)serine modification is found at Ser-2335.

It participates in mycotoxin biosynthesis. In terms of biological role, highly reducing polyketide synthase; part of the gene clusters that mediate the biosynthesis of the host-selective toxins (HSTs) AF-toxins responsible for Alternaria black spot of strawberry disease by the strawberry pathotype. AF-toxin I and III are valine derivatives of 2,3-dyhydroxy-isovaleric acid and 2-hydroxy-isovaleric acid respectively, while AF II is an isoleucine derivative of 2-hydroxy-valeric acid. These derivatives are bound to a 9,10-epoxy-8-hydroxy-9-methyl-decatrienoic acid (EDA) moiety. On cellular level, AF-toxins affect plasma membrane of susceptible cells and cause a sudden increase in loss of K(+) after a few minutes of toxin treatment. The aldo-keto reductase AFTS1 catalyzes the conversion of 2-keto-isovaleric acid (2-KIV) to 2-hydroxy-isovaleric acid (2-HIV) by reduction of its ketone to an alcohol. The acyl-CoA ligase AFT1, the hydrolase AFT2 and the enoyl-CoA hydratases AFT3 and AFT6, but also the polyketide synthase AFT9, the acyl-CoA dehydrogenase AFT10, the cytochrome P450 monooxygenase AFT11 and the oxidoreductase AFT12 are all involved in the biosynthesis of the AK-, AF- and ACT-toxin common EDA structural moiety. The exact function of each enzyme, and of additional enzymes identified within the AF-toxin clusters have still to be determined. This chain is Highly reducing polyketide synthase AFT9-1, found in Alternaria alternata (Alternaria rot fungus).